The primary structure comprises 930 residues: Translation initiation factor IF-2 (930 aa).

Residues 31-317 (FVKSASSTVE…RKSKRAKRAE (287 aa)) form a disordered region. The segment covering 61 to 78 (PAAGASNGAPAKPSAPGA) has biased composition (low complexity). 2 stretches are compositionally biased toward pro residues: residues 79 to 99 (RPGPRPGPPAPAQPKEPPAPA) and 108 to 120 (PAAPAPPAAPPAP). Low complexity predominate over residues 121-135 (AASAAPPSAPEAPSA). 2 stretches are compositionally biased toward pro residues: residues 136–158 (RPTPGPRPGPGGPKPGAPKPAPR) and 178–192 (PRPQGPAGPGGPRPG). Residues 193-205 (PGAGGPRPGGGPR) show a composition bias toward gly residues. Positions 212–242 (NMPPRPVGGPRPGGGPRPGGGPRPGAGPRPT) are enriched in pro residues. Positions 244–301 (GGAGRPGGGGGGNYRGGGAGGGGGAGGAAAGGFRGRPGGGGGRPGQRGGAAGAFGRPG) are enriched in gly residues. The segment covering 305–314 (KRGRKSKRAK) has biased composition (basic residues). Residues 426–598 (FRPPVVTVMG…VVLTADASLD (173 aa)) form the tr-type G domain. The G1 stretch occupies residues 435–442 (GHVDHGKT). 435-442 (GHVDHGKT) is a binding site for GTP. A G2 region spans residues 460–464 (GITQH). The segment at 485-488 (DTPG) is G3. Residues 485 to 489 (DTPGH) and 539 to 542 (NKID) each bind GTP. Residues 539-542 (NKID) form a G4 region. Positions 575–577 (SAK) are G5.

It belongs to the TRAFAC class translation factor GTPase superfamily. Classic translation factor GTPase family. IF-2 subfamily.

The protein resides in the cytoplasm. In terms of biological role, one of the essential components for the initiation of protein synthesis. Protects formylmethionyl-tRNA from spontaneous hydrolysis and promotes its binding to the 30S ribosomal subunits. Also involved in the hydrolysis of GTP during the formation of the 70S ribosomal complex. The polypeptide is Translation initiation factor IF-2 (Mycolicibacterium gilvum (strain PYR-GCK) (Mycobacterium gilvum (strain PYR-GCK))).